The chain runs to 239 residues: Cysteine-rich venom protein ophanin (239 aa).

A signal peptide spans 1 to 18 (MIAFTLLSLAAVLQQSFG). The 129-residue stretch at 37–165 (VDLHNSLRRS…EYSYFYVCQY (129 aa)) folds into the SCP domain. Intrachain disulfides connect cysteine 74/cysteine 152, cysteine 91/cysteine 166, cysteine 147/cysteine 163, cysteine 185/cysteine 192, cysteine 188/cysteine 197, cysteine 201/cysteine 234, cysteine 210/cysteine 228, and cysteine 219/cysteine 232. The region spanning 201–234 (CTLYNEYTNCDSLVKQSSCQDEWIKSKCPASCFC) is the ShKT domain.

In terms of tissue distribution, expressed by the venom gland.

Its subcellular location is the secreted. Its function is as follows. Weakly blocks contraction of smooth muscle elicited by high potassium-induced depolarization, but does not block caffeine-stimulated contraction. May target voltage-gated calcium channels on smooth muscle. The polypeptide is Cysteine-rich venom protein ophanin (Ophiophagus hannah (King cobra)).